Here is a 125-residue protein sequence, read N- to C-terminus: Small ribosomal subunit protein eS6 (125 aa).

It belongs to the eukaryotic ribosomal protein eS6 family.

The chain is Small ribosomal subunit protein eS6 from Pyrococcus abyssi (strain GE5 / Orsay).